A 168-amino-acid chain; its full sequence is Photosystem I assembly protein Ycf3 (168 aa).

3 TPR repeats span residues 35–68 (AFTY…EMDP), 72–105 (SYIL…NPFL), and 120–153 (GEQA…TPGN).

This sequence belongs to the Ycf3 family.

The protein localises to the plastid. It is found in the chloroplast thylakoid membrane. Essential for the assembly of the photosystem I (PSI) complex. May act as a chaperone-like factor to guide the assembly of the PSI subunits. This Pelargonium hortorum (Common geranium) protein is Photosystem I assembly protein Ycf3.